Reading from the N-terminus, the 135-residue chain is Large ribosomal subunit protein bL19 (135 aa).

This sequence belongs to the bacterial ribosomal protein bL19 family.

Its function is as follows. This protein is located at the 30S-50S ribosomal subunit interface and may play a role in the structure and function of the aminoacyl-tRNA binding site. This is Large ribosomal subunit protein bL19 from Xanthomonas oryzae pv. oryzae (strain KACC10331 / KXO85).